The following is a 249-amino-acid chain: Chymase (249 aa).

The first 19 residues, 1 to 19, serve as a signal peptide directing secretion; sequence MHCLPLTLLLLLLCSRAEA. Residues 20–21 constitute a propeptide, activation peptide; it reads EE. Positions 22-245 constitute a Peptidase S1 domain; that stretch reads IIGGTESKPH…YRPWINKVLK (224 aa). Cys51 and Cys67 are oxidised to a cystine. Catalysis depends on charge relay system residues His66 and Asp110. 2 disulfide bridges follow: Cys144/Cys209 and Cys175/Cys188. The active-site Charge relay system is Ser203.

Belongs to the peptidase S1 family. Granzyme subfamily.

The protein localises to the secreted. It is found in the cytoplasmic granule. It catalyses the reaction Preferential cleavage: Phe-|-Xaa &gt; Tyr-|-Xaa &gt; Trp-|-Xaa &gt; Leu-|-Xaa.. Its function is as follows. Major secreted protease of mast cells with suspected roles in vasoactive peptide generation, extracellular matrix degradation, and regulation of gland secretion. This is Chymase (CMA1) from Canis lupus familiaris (Dog).